The primary structure comprises 487 residues: NGFI-A-binding protein 1 (487 aa).

An NCD1 region spans residues 4-82; sequence ALPRTLGELQ…RDWVTNPGLF (79 aa). Residues lysine 126, lysine 129, and lysine 143 each participate in a glycyl lysine isopeptide (Lys-Gly) (interchain with G-Cter in SUMO2) cross-link. The interval 162–188 is disordered; that stretch reads QGHHATESEHSLSPADLGSPASPKESS. Residues serine 172 and serine 183 each carry the phosphoserine modification. Residue lysine 212 forms a Glycyl lysine isopeptide (Lys-Gly) (interchain with G-Cter in SUMO2) linkage. The interval 221-310 is NCD2; the sequence is LLKTNKKLAK…ARQISREVTY (90 aa). The interval 307–338 is necessary for nuclear localization; sequence EVTYKYTYRTTKSKCGERDELSPKRIKVEDGF. Position 328 is a phosphoserine (serine 328). A Glycyl lysine isopeptide (Lys-Gly) (interchain with G-Cter in SUMO1); alternate cross-link involves residue lysine 333. Lysine 333 is covalently cross-linked (Glycyl lysine isopeptide (Lys-Gly) (interchain with G-Cter in SUMO2); alternate). Residues lysine 355, lysine 369, and lysine 373 each participate in a glycyl lysine isopeptide (Lys-Gly) (interchain with G-Cter in SUMO2) cross-link. A disordered region spans residues 399–434; it reads YRQSSEEHSPNGLTSDNSDGQGERPLNLRMPNLQNR. Serine 407 bears the Phosphoserine mark. Residues 409 to 418 are compositionally biased toward polar residues; the sequence is NGLTSDNSDG. Glycyl lysine isopeptide (Lys-Gly) (interchain with G-Cter in SUMO2) cross-links involve residues lysine 454, lysine 465, and lysine 477. Residue lysine 480 forms a Glycyl lysine isopeptide (Lys-Gly) (interchain with G-Cter in SUMO1); alternate linkage. A Glycyl lysine isopeptide (Lys-Gly) (interchain with G-Cter in SUMO2); alternate cross-link involves residue lysine 480.

Belongs to the NAB family. As to quaternary structure, homomultimers may associate with EGR1 bound to DNA. As to expression, isoform Short is found in myeloid leukemia cell line KG-1.

The protein resides in the nucleus. Acts as a transcriptional repressor for zinc finger transcription factors EGR1 and EGR2. This chain is NGFI-A-binding protein 1 (NAB1), found in Homo sapiens (Human).